The sequence spans 437 residues: Glutamate-1-semialdehyde 2,1-aminomutase (437 aa).

Position 273 is an N6-(pyridoxal phosphate)lysine (Lys273).

It belongs to the class-III pyridoxal-phosphate-dependent aminotransferase family. HemL subfamily. In terms of assembly, homodimer. It depends on pyridoxal 5'-phosphate as a cofactor.

Its subcellular location is the cytoplasm. The enzyme catalyses (S)-4-amino-5-oxopentanoate = 5-aminolevulinate. It functions in the pathway porphyrin-containing compound metabolism; protoporphyrin-IX biosynthesis; 5-aminolevulinate from L-glutamyl-tRNA(Glu): step 2/2. The protein is Glutamate-1-semialdehyde 2,1-aminomutase of Chlamydia abortus (strain DSM 27085 / S26/3) (Chlamydophila abortus).